Consider the following 321-residue polypeptide: Putative sulfotransferase vep-2 (321 aa).

A helical transmembrane segment spans residues 11 to 31 (IARVLIIIASISVICITLFIS).

To C.elegans C41C4.1 and C18B2.2.

The protein resides in the membrane. This Caenorhabditis elegans protein is Putative sulfotransferase vep-2.